The primary structure comprises 106 residues: SH3 domain-binding glutamic acid-rich-like protein 2 (106 aa).

Residues 61–67 carry the SH3-binding motif; sequence QGNPLPP.

It belongs to the SH3BGR family.

Its subcellular location is the nucleus. This Xenopus tropicalis (Western clawed frog) protein is SH3 domain-binding glutamic acid-rich-like protein 2 (sh3bgrl2).